The sequence spans 727 residues: MSKTVVLAEKPSVGRDLARVLKCHKKGNGYLEGDRYIVTWALGHLVTLADPEGYGKEYQSWRLEDLPIIPEPLKLVVIKKTGKQFQAVKSQLIRKDVKDIVIATDAGREGELVARWIIEKAKVTKPLKRLWISSVTDKAIKDGFKNLKNGKDFENLYHSAVARAEADWIVGINATRALTTKFNAQLSCGRVQTPTLAMIAKREEDIKNFKPVPYFGLRAAVDGMTLTWQDKKTSQTRTFNASVTSQLAGALQGKPAVIVDLKKTAKKSFAPGLYDLTELQRDAHKRFGFSAKETLSVLQKLYEQHKLVTYPRTDSRFLSNDIVPTLKDRLEGMQVKPYAQHVARILKRGVKANKSFVNDAKVSDHHAIIPTEEPLALGALSEKERKLYDLIAKRFLAVLMPPFEYEETKVFAEIGGETFTAKGKTVQSQGWKAVYDFADEDDDEEEKDQTLPKLAKGDTLSVRSLTETKGETKPPARFNEGTLLSAMENPAAFMQGEEKNLVKTLGETGGLGTVATRADIIEKLFNTFLIEKKGKDIYITSKGKQLLELVPSDLKSPALTAEWEQKLSGIAKGKLKSSAFIKEMKEYAKQTIREIKSSNQKFKHDNITGTHCPDCGKLMLKVNGKRGTMLVCQDRECGHRKTVAKQTNARCPVCHKRMELRGHGEGQTFACVCGHREKLSVFEKRRAKDKNSKASKRDVHSYMKKQNKDEPINNALAEQLKKLKLDQ.

A Toprim domain is found at 3 to 136; it reads KTVVLAEKPS…LKRLWISSVT (134 aa). Mg(2+) contacts are provided by E9 and D105. The 440-residue stretch at 153 to 592 folds into the Topo IA-type catalytic domain; the sequence is FENLYHSAVA…EMKEYAKQTI (440 aa). The interaction with DNA stretch occupies residues 187-192; sequence SCGRVQ. Y310 functions as the O-(5'-phospho-DNA)-tyrosine intermediate in the catalytic mechanism. A compositionally biased stretch (basic and acidic residues) spans 685 to 711; sequence RRAKDKNSKASKRDVHSYMKKQNKDEP. Positions 685 to 713 are disordered; the sequence is RRAKDKNSKASKRDVHSYMKKQNKDEPIN.

The protein belongs to the type IA topoisomerase family. The cofactor is Mg(2+).

The enzyme catalyses ATP-independent breakage of single-stranded DNA, followed by passage and rejoining.. In terms of biological role, releases the supercoiling and torsional tension of DNA, which is introduced during the DNA replication and transcription, by transiently cleaving and rejoining one strand of the DNA duplex. Introduces a single-strand break via transesterification at a target site in duplex DNA. The scissile phosphodiester is attacked by the catalytic tyrosine of the enzyme, resulting in the formation of a DNA-(5'-phosphotyrosyl)-enzyme intermediate and the expulsion of a 3'-OH DNA strand. The free DNA strand then undergoes passage around the unbroken strand, thus removing DNA supercoils. Finally, in the religation step, the DNA 3'-OH attacks the covalent intermediate to expel the active-site tyrosine and restore the DNA phosphodiester backbone. The chain is DNA topoisomerase 3 from Bacillus licheniformis (strain ATCC 14580 / DSM 13 / JCM 2505 / CCUG 7422 / NBRC 12200 / NCIMB 9375 / NCTC 10341 / NRRL NRS-1264 / Gibson 46).